The primary structure comprises 310 residues: Malate dehydrogenase (310 aa).

Residues 7–12 (GAGNVG) and Asp32 each bind NAD(+). Substrate contacts are provided by Arg81 and Arg87. NAD(+) is bound by residues Asn94 and 117–119 (VSN). Substrate is bound by residues Asn119 and Arg150. His174 serves as the catalytic Proton acceptor.

It belongs to the LDH/MDH superfamily. MDH type 3 family.

The catalysed reaction is (S)-malate + NAD(+) = oxaloacetate + NADH + H(+). Catalyzes the reversible oxidation of malate to oxaloacetate. This Pelodictyon phaeoclathratiforme (strain DSM 5477 / BU-1) protein is Malate dehydrogenase.